The chain runs to 451 residues: ESX secretion system protein YukC (451 aa).

A helical membrane pass occupies residues 221–241 (IGLGLIVLLVPALIYSMYALF). Positions 362–447 (DEDIQKELDS…KKETEKKDEK (86 aa)) form a coiled coil. The span at 376-386 (LEKAQKERQEN) shows a compositional bias: basic and acidic residues. The tract at residues 376 to 451 (LEKAQKERQE…EKKDEKKDDK (76 aa)) is disordered. Residues 387–397 (KQSNSETSLVD) are compositionally biased toward polar residues. The segment covering 406 to 451 (DEEKQAEEKAAEEKAAAEEKAKKEEQKEKEDEKKETEKKDEKKDDK) has biased composition (basic and acidic residues).

Belongs to the EssB family.

It is found in the cell membrane. In terms of biological role, required for YukE secretion. Probable component or regulator of the ESX/ESAT-6-like secretion system (BsEss). Required to deliver LXG toxins to target cells. The polypeptide is ESX secretion system protein YukC (yukC) (Bacillus subtilis (strain 168)).